A 292-amino-acid chain; its full sequence is Shikimate dehydrogenase (NADP(+)) (292 aa).

Shikimate-binding positions include 22 to 24 (SLS) and serine 69. The active-site Proton acceptor is the lysine 73. Residues asparagine 94 and aspartate 111 each contribute to the shikimate site. Residues 135–139 (GVGGA) and isoleucine 236 contribute to the NADP(+) site. Tyrosine 238 provides a ligand contact to shikimate. Glycine 260 contacts NADP(+).

This sequence belongs to the shikimate dehydrogenase family. Homodimer.

It catalyses the reaction shikimate + NADP(+) = 3-dehydroshikimate + NADPH + H(+). The protein operates within metabolic intermediate biosynthesis; chorismate biosynthesis; chorismate from D-erythrose 4-phosphate and phosphoenolpyruvate: step 4/7. Its function is as follows. Involved in the biosynthesis of the chorismate, which leads to the biosynthesis of aromatic amino acids. Catalyzes the reversible NADPH linked reduction of 3-dehydroshikimate (DHSA) to yield shikimate (SA). In Streptococcus pyogenes serotype M18 (strain MGAS8232), this protein is Shikimate dehydrogenase (NADP(+)).